The following is a 393-amino-acid chain: Staphopain B (393 aa).

The first 36 residues, 1-36 (MNSSCKSRVFNIISIIMVSMLILSLGAFANNNKAKA), serve as a signal peptide directing secretion. Residues 37–219 (DSHSKQLEIN…KVEENEAIQE (183 aa)) constitute a propeptide that is removed on maturation. Catalysis depends on residues Cys243, His340, and Asn360.

The protein belongs to the peptidase C47 family. As to quaternary structure, in the cytoplasm, prematurely activated/folded SspB forms a stable non-covalent complex with SspC. Proteolytically cleaved by staphylococcal serine protease (SspA).

It localises to the secreted. Prematurely activated/folded staphopain B is inhibited by staphostatin B (SspC), which is probably required to protect staphylococcal cytoplasmic proteins from degradation by SspB. Also inactivated by E-64 and stimulated by EDTA. Its function is as follows. Cysteine protease that plays an important role in the inhibition of host innate immune response. Degrades host elastin, fibrogen, fibronectin and kininogen. Blocks phagocytosis of opsonised S.aureus by neutrophils and monocytes by inducing their death in a proteolytic activity-dependent manner. Decreases surface expression of the 'don't eat me' signal CD31 on neutrophils. Cleaves host galectin-3/LGALS3, thereby inhibiting the neutrophil-activating ability of the lectin. The protein is Staphopain B (sspB) of Staphylococcus aureus (strain NCTC 8325 / PS 47).